The sequence spans 295 residues: Farnesyl diphosphate synthase (295 aa).

Isopentenyl diphosphate is bound by residues K46, R49, and H78. Mg(2+) is bound by residues D85 and D91. R96 provides a ligand contact to (2E)-geranyl diphosphate. R97 lines the isopentenyl diphosphate pocket. Positions 180, 181, 220, and 237 each coordinate (2E)-geranyl diphosphate.

Belongs to the FPP/GGPP synthase family. The cofactor is Mg(2+).

The protein resides in the cytoplasm. The enzyme catalyses isopentenyl diphosphate + (2E)-geranyl diphosphate = (2E,6E)-farnesyl diphosphate + diphosphate. This chain is Farnesyl diphosphate synthase (ispA), found in Haemophilus influenzae (strain ATCC 51907 / DSM 11121 / KW20 / Rd).